The primary structure comprises 860 residues: DNA mismatch repair protein MutS (860 aa).

Residue 618–625 (GPNMGGKS) participates in ATP binding.

Belongs to the DNA mismatch repair MutS family.

Functionally, this protein is involved in the repair of mismatches in DNA. It is possible that it carries out the mismatch recognition step. This protein has a weak ATPase activity. This is DNA mismatch repair protein MutS from Hahella chejuensis (strain KCTC 2396).